The primary structure comprises 186 residues: Ribosome-recycling factor (186 aa).

Belongs to the RRF family.

The protein resides in the cytoplasm. In terms of biological role, responsible for the release of ribosomes from messenger RNA at the termination of protein biosynthesis. May increase the efficiency of translation by recycling ribosomes from one round of translation to another. This chain is Ribosome-recycling factor, found in Methylocella silvestris (strain DSM 15510 / CIP 108128 / LMG 27833 / NCIMB 13906 / BL2).